Here is a 176-residue protein sequence, read N- to C-terminus: Cytochrome b (176 aa).

Transmembrane regions (helical) follow at residues 33 to 53 (FGSL…FLAM), 77 to 98 (WVLR…YLHV), and 113 to 133 (WNMG…GYVL). Positions 83 and 97 each coordinate heme b.

This sequence belongs to the cytochrome b family. As to quaternary structure, the cytochrome bc1 complex contains 11 subunits: 3 respiratory subunits (MT-CYB, CYC1 and UQCRFS1), 2 core proteins (UQCRC1 and UQCRC2) and 6 low-molecular weight proteins (UQCRH/QCR6, UQCRB/QCR7, UQCRQ/QCR8, UQCR10/QCR9, UQCR11/QCR10 and a cleavage product of UQCRFS1). This cytochrome bc1 complex then forms a dimer. It depends on heme b as a cofactor.

It is found in the mitochondrion inner membrane. Functionally, component of the ubiquinol-cytochrome c reductase complex (complex III or cytochrome b-c1 complex) that is part of the mitochondrial respiratory chain. The b-c1 complex mediates electron transfer from ubiquinol to cytochrome c. Contributes to the generation of a proton gradient across the mitochondrial membrane that is then used for ATP synthesis. This is Cytochrome b (MT-CYB) from Nycticeius humeralis (Evening bat).